The sequence spans 302 residues: Troponin T, cardiac muscle isoforms (302 aa).

Over residues 1–55 the composition is skewed to acidic residues; the sequence is MSDSEEVVEEYEQEQEEEYVEEEEEEWLEEDDGQEDQVDEEEEETEETTAEEQED. Disordered stretches follow at residues 1–99, 138–230, and 280–302; these read MSDS…GERL, KDRI…RKPL, and SDHQ…GRWK. At Ser-2 the chain carries N-acetylserine. Phosphoserine; by CK2 is present on Ser-2. The segment covering 65 to 79 has biased composition (basic and acidic residues); that stretch reads EGDREQEPGEGESKP. Residues 82-93 show a composition bias toward pro residues; that stretch reads KPFMPNLVPPKI. Composition is skewed to basic and acidic residues over residues 138-186 and 204-230; these read KDRI…EKEA and KSEK…RKPL.

Belongs to the troponin T family.

Its function is as follows. Troponin T is the tropomyosin-binding subunit of troponin, the thin filament regulatory complex which confers calcium-sensitivity to striated muscle actomyosin ATPase activity. This is Troponin T, cardiac muscle isoforms (TNNT2) from Gallus gallus (Chicken).